The chain runs to 942 residues: Serine/threonine-protein kinase ATG1 (942 aa).

The Protein kinase domain maps to 11 to 312 (YVVEKEIGKG…FEEFFNNKIV (302 aa)). ATP contacts are provided by residues 17 to 25 (IGKGSFATV) and Lys41. Asp159 functions as the Proton acceptor in the catalytic mechanism. Residues 435 to 452 (NSSRVNKLDKSNLSGKSD) are compositionally biased toward polar residues. 3 disordered regions span residues 435–454 (NSSR…SDSS), 505–529 (QPHN…SRRA), and 817–836 (NSKP…NDSN). The span at 515-529 (RAPSTTSGGTSSRRA) shows a compositional bias: low complexity. The span at 819-834 (KPGTHNQSPKSKISND) shows a compositional bias: polar residues.

Belongs to the protein kinase superfamily. Ser/Thr protein kinase family. APG1/unc-51/ULK1 subfamily. As to quaternary structure, homodimer. Forms a ternary complex with ATG13 and ATG17.

The protein localises to the cytoplasm. Its subcellular location is the preautophagosomal structure membrane. It carries out the reaction L-seryl-[protein] + ATP = O-phospho-L-seryl-[protein] + ADP + H(+). It catalyses the reaction L-threonyl-[protein] + ATP = O-phospho-L-threonyl-[protein] + ADP + H(+). Serine/threonine protein kinase involved in the cytoplasm to vacuole transport (Cvt) and found to be essential in autophagy, where it is required for the formation of autophagosomes. Involved in the clearance of protein aggregates which cannot be efficiently cleared by the proteasome. Required for selective autophagic degradation of the nucleus (nucleophagy) as well as for mitophagy which contributes to regulate mitochondrial quantity and quality by eliminating the mitochondria to a basal level to fulfill cellular energy requirements and preventing excess ROS production. Also involved in endoplasmic reticulum-specific autophagic process, in selective removal of ER-associated degradation (ERAD) substrates. Plays a key role in ATG9 and ATG23 cycling through the pre-autophagosomal structure and is necessary to promote ATG18 binding to ATG9 through phosphorylation of ATG9. Catalyzes phosphorylation of ATG4, decreasing the interaction between ATG4 and ATG8 and impairing deconjugation of PE-conjugated forms of ATG8. Contributes to virulence by conferring resistance to unstable nutrient environments and immune defense of hosts. This chain is Serine/threonine-protein kinase ATG1, found in Candida glabrata (strain ATCC 2001 / BCRC 20586 / JCM 3761 / NBRC 0622 / NRRL Y-65 / CBS 138) (Yeast).